The sequence spans 321 residues: Hex-5-enoyl-[acyl-carrier protein] acetylenase (321 aa).

Transmembrane regions (helical) follow at residues Phe-36–Trp-56 and Val-62–Leu-82. The Histidine box-1 motif lies at His-83 to His-88. A helical membrane pass occupies residues Val-99 to Val-119. Residues His-120–His-124 carry the Histidine box-2 motif. A helical transmembrane segment spans residues Tyr-188 to Gly-208. Positions Gln-269 to His-273 match the Histidine box-3 motif.

Belongs to the fatty acid desaturase type 2 family. It depends on Fe(2+) as a cofactor.

It is found in the membrane. The enzyme catalyses 5-hexenoyl-[ACP] + 2 reduced [2Fe-2S]-[ferredoxin] + O2 + 2 H(+) = 5-hexynoyl-[ACP] + 2 oxidized [2Fe-2S]-[ferredoxin] + 2 H2O. The catalysed reaction is hexanoyl-[ACP] + 2 reduced [2Fe-2S]-[ferredoxin] + O2 + 2 H(+) = 5-hexenoyl-[ACP] + 2 oxidized [2Fe-2S]-[ferredoxin] + 2 H2O. Functionally, desaturase involved in the biosynthesis of jamaicamides, which show sodium channel blocking activity and fish toxicity. Catalyzes the conversion of 5-hexenoyl loaded onto the acyl carrier protein JamC (5-hexenoyl-JamC) to 5-hexynoyl-JamC. Can also catalyze the conversion of hexanoyl-JamC to 5-hexenoyl-JamC, but it cannot use free 5-hexenoic acid, 5-hexenoyl-CoA, 2-hexenoyl-JamC, 3-hexenoyl-JamC or 4-hexenoyl-JamC. Is specific for C(6) chains, and cannot use 4-pentenoyl-JamC, 6-heptenoyl-JamC or 7-octenoyl-JamC as substrate. This Moorena producens (strain JHB) protein is Hex-5-enoyl-[acyl-carrier protein] acetylenase.